The chain runs to 130 residues: Cysteine methyltransferase (130 aa).

The enzyme catalyses [trehalose-6-phosphate synthase]-L-cysteine + S-adenosyl-L-methionine = [trehalose-6-phosphate synthase]-S-methyl-L-cysteine + S-adenosyl-L-homocysteine + H(+). S-adenosyl-L-methionine-dependent protein-cysteine S-methyltransferase with broad substrate specificity. Methylates trehalose-6-phosphate synthase (TPS), enhancing its enzymatic activity and promoting trehalose synthesis upon entry of cells into stationary phase. The chain is Cysteine methyltransferase from Saccharomyces cerevisiae (Baker's yeast).